A 348-amino-acid polypeptide reads, in one-letter code: Phenylalanine--tRNA ligase alpha subunit (348 aa).

Mg(2+) is bound at residue Glu-259.

This sequence belongs to the class-II aminoacyl-tRNA synthetase family. Phe-tRNA synthetase alpha subunit type 1 subfamily. In terms of assembly, tetramer of two alpha and two beta subunits. Mg(2+) is required as a cofactor.

Its subcellular location is the cytoplasm. The catalysed reaction is tRNA(Phe) + L-phenylalanine + ATP = L-phenylalanyl-tRNA(Phe) + AMP + diphosphate + H(+). The sequence is that of Phenylalanine--tRNA ligase alpha subunit from Lacticaseibacillus paracasei (strain ATCC 334 / BCRC 17002 / CCUG 31169 / CIP 107868 / KCTC 3260 / NRRL B-441) (Lactobacillus paracasei).